Here is a 68-residue protein sequence, read N- to C-terminus: MSRLGVLLTICLLLFPLTAVPLDGDQPADRPAERLQDDISSEHHPHFDSGRECCGSFACRFGCVPCCV.

The first 19 residues, 1–19 (MSRLGVLLTICLLLFPLTA), serve as a signal peptide directing secretion. A propeptide spanning residues 20 to 51 (VPLDGDQPADRPAERLQDDISSEHHPHFDSGR) is cleaved from the precursor. Residues 22-46 (LDGDQPADRPAERLQDDISSEHHPH) are disordered. Residues 27–46 (PADRPAERLQDDISSEHHPH) show a composition bias toward basic and acidic residues. Disulfide bonds link Cys-53–Cys-67, Cys-54–Cys-63, and Cys-59–Cys-66. Position 65 is a 4-hydroxyproline (Pro-65).

The protein belongs to the conotoxin M superfamily. Expressed by the venom duct.

Its subcellular location is the secreted. The protein is Conotoxin Mr3.3 of Conus marmoreus (Marble cone).